The following is a 520-amino-acid chain: BBSome complex member BBS4 (520 aa).

Positions 1–26 are disordered; the sequence is MAEVKLGMKTQVPASVESQKPRSKKA. The segment at 1–66 is required for localization to centrosomes; it reads MAEVKLGMKT…EQLQETQGLC (66 aa). TPR repeat units lie at residues 67–100, 102–134, 135–167, 168–201, 203–235, 237–269, 270–303, 304–337, 339–371, and 373–408; these read EYAIYVQALIFRLEGNIQESLELFQTCAVLSPQC, DNLKQVARSLFLLGKHKAATEVYNEAAKLNQKD, WEICHNLGVCYTYLKQFNKAQDQLHSALQLNKH, DLTYIMLGKIHLLQGDLDKAIEIYKKAVEFSPEN, ELLTTLGLLYLQLGVYQKAFEHLGNALTYDPAN, KAILAAGSMMQTHGDFDVALTKYRVVACAIPES, PPLWNNIGMCFFGKKKYVAAISCLKRANYLAPFD, WKILYNLGLVHLTMQQYASAFHFLSAAINFQPKM, ELYMLLAVALTNLEDIENARRAYVEAVRLDKCN, and LVNLNYAVLLYNQGEKKSALAQYQEMEKKVNFLKDN. The interval 101–337 is interaction with PCM1; sequence ADNLKQVARS…SAAINFQPKM (237 aa). The required for localization to centrosomes stretch occupies residues 338–520; that stretch reads GELYMLLAVA…TEASEQKKEK (183 aa). Residues 488-520 form a disordered region; that stretch reads AQLPKPPSLPLEPEPEPTVEASPTEASEQKKEK.

It belongs to the BBS4 family. In terms of assembly, part of BBSome complex, that contains BBS1, BBS2, BBS4, BBS5, BBS7, BBS8/TTC8, BBS9 and BBIP10. Interacts with PCM1 and DCTN1. Interacts with DC28B. Interacts with ALDOB and C2CD3. Interacts with PKD1. Interacts with CEP290. Interacts with DLEC1. As to expression, expressed in the hippocampus and dentate gyrus, the columnar epithelial cells of bronchioles, the olfactory epithelium and the inner segment and outer nuclear layer of the retina. Expressed in testis.

The protein resides in the cytoplasm. Its subcellular location is the cytoskeleton. The protein localises to the microtubule organizing center. It localises to the centrosome. It is found in the cell projection. The protein resides in the cilium membrane. Its subcellular location is the centriolar satellite. The protein localises to the cilium. It localises to the flagellum. In terms of biological role, the BBSome complex is thought to function as a coat complex required for sorting of specific membrane proteins to the primary cilia. The BBSome complex is required for ciliogenesis but is dispensable for centriolar satellite function. This ciliogenic function is mediated in part by the Rab8 GDP/GTP exchange factor, which localizes to the basal body and contacts the BBSome. Rab8(GTP) enters the primary cilium and promotes extension of the ciliary membrane. Firstly the BBSome associates with the ciliary membrane and binds to RAB3IP/Rabin8, the guanosyl exchange factor (GEF) for Rab8 and then the Rab8-GTP localizes to the cilium and promotes docking and fusion of carrier vesicles to the base of the ciliary membrane. The BBSome complex, together with the LTZL1, controls SMO ciliary trafficking and contributes to the sonic hedgehog (SHH) pathway regulation. Required for proper BBSome complex assembly and its ciliary localization. Required for microtubule anchoring at the centrosome but not for microtubule nucleation. May be required for the dynein-mediated transport of pericentriolar proteins to the centrosome. The polypeptide is BBSome complex member BBS4 (Bbs4) (Mus musculus (Mouse)).